A 950-amino-acid chain; its full sequence is A disintegrin and metalloproteinase with thrombospondin motifs 15 (950 aa).

The first 18 residues, 1 to 18 (MLLLGISILALAWRPAGS), serve as a signal peptide directing secretion. The propeptide occupies 19 to 212 (SEPEWEVVVP…NRRRSGRAKR (194 aa)). N-linked (GlcNAc...) asparagine glycosylation is present at Asn-141. The segment at 144–172 (APEAQRHSQGAHLLQRRGAPVGPSGDPTS) is disordered. Residues 172-179 (SRCGVASG) carry the Cysteine switch motif. Residue Cys-174 participates in Zn(2+) binding. One can recognise a Peptidase M12B domain in the interval 218 to 427 (RYVETLVVAD…GHGDCLLDQP (210 aa)). Disulfide bonds link Cys-293–Cys-345, Cys-322–Cys-327, Cys-339–Cys-422, Cys-377–Cys-406, Cys-448–Cys-470, Cys-459–Cys-480, Cys-465–Cys-499, Cys-493–Cys-504, Cys-528–Cys-565, Cys-532–Cys-570, and Cys-543–Cys-555. His-361 is a binding site for Zn(2+). Glu-362 is a catalytic residue. Residues His-365 and His-371 each coordinate Zn(2+). The Disintegrin domain maps to 428-515 (SKPITLPEDL…ERHNPNKYRV (88 aa)). Residues 516 to 571 (DGSWAKWEPYGSCSRTCGGGVQLARRQCSNPTPANGGKYCEGVRVKYRSCNLEPCP) form the TSP type-1 1 domain. N-linked (GlcNAc...) asparagine glycosylation is found at Asn-591, Asn-623, and Asn-679. The spacer stretch occupies residues 701–838 (AIPAGASSID…SNQVEQPDNR (138 aa)). Positions 798 to 822 (FYLPKEPREDKSTRPKDPRGSPVLR) are disordered. Basic and acidic residues predominate over residues 802 to 816 (KEPREDKSTRPKDPR). 2 TSP type-1 domains span residues 839–895 (PPAR…EPCP) and 896–949 (TWEL…VLRP).

Zn(2+) is required as a cofactor. The precursor is cleaved by a furin endopeptidase. Post-translationally, glycosylated. Can be O-fucosylated by POFUT2 on a serine or a threonine residue found within the consensus sequence C1-X(2)-(S/T)-C2-G of the TSP type-1 repeat domains where C1 and C2 are the first and second cysteine residue of the repeat, respectively. Fucosylated repeats can then be further glycosylated by the addition of a beta-1,3-glucose residue by the glucosyltransferase, B3GALTL. Fucosylation mediates the efficient secretion of ADAMTS family members. Can be C-glycosylated with one or two mannose molecules on tryptophan residues within the consensus sequence W-X-X-W of the TPRs. Also N-glycosylated. These other glycosylations can also facilitate secretion. In the adult colon, highly expressed in the muscularis externa (inner circular smooth muscle and outer longitudinal smooth muscle), muscularis mucosa, submucosal glands, crypt, villi epithelial cells, goblet cells and lamina propria. Expressed at perimuscular and peritendious areas in the developing limbs.

Its subcellular location is the secreted. It is found in the extracellular space. It localises to the extracellular matrix. The protein resides in the cell surface. Its function is as follows. Metalloprotease which has proteolytic activity against the proteoglycan VCAN, cleaving it at the 'Glu-1401-|-1402-Ala' site. Cleaves VCAN in the pericellular matrix surrounding myoblasts, facilitating myoblast contact and fusion which is required for skeletal muscle development and regeneration. This Mus musculus (Mouse) protein is A disintegrin and metalloproteinase with thrombospondin motifs 15 (Adamts15).